The sequence spans 2144 residues: HEAT repeat-containing protein 1 (2144 aa).

Residue Met-1 is modified to N-acetylmethionine. N-acetylthreonine; in HEAT repeat-containing protein 1, N-terminally processed is present on Thr-2. Ser-516 carries the post-translational modification Phosphoserine. One copy of the HEAT 1 repeat lies at 913 to 951 (ASISSPVVTSLLINLGSPVKEVRRAAIQCLQALSGVASP). The interval 1170–1191 (KAKPLGTVQQKRRQKMQQKKSQ) is disordered. Phosphoserine is present on Ser-1190. One copy of the HEAT 2 repeat lies at 1347–1385 (NKTVKMVIPALIQSDSGDSIEVSRNVEEIVVKIISVFVD). At Ser-1492 the chain carries Phosphoserine. HEAT repeat units lie at residues 1594-1632 (LLPT…QNIS), 1730-1770 (IPQL…VVET), and 2100-2138 (IVLL…VLGE).

Belongs to the HEATR1/UTP10 family. Part of the small subunit (SSU) processome, composed of more than 70 proteins and the RNA chaperone small nucleolar RNA (snoRNA) U3. Interacts with MYC; the interaction is required for localization of MYC to the nucleolus.

The protein resides in the nucleus. Its subcellular location is the nucleolus. In terms of biological role, ribosome biogenesis factor; required for recruitment of Myc to nucleoli. Involved in nucleolar processing of pre-18S ribosomal RNA. Required for optimal pre-ribosomal RNA transcription by RNA polymerase I. Part of the small subunit (SSU) processome, first precursor of the small eukaryotic ribosomal subunit. During the assembly of the SSU processome in the nucleolus, many ribosome biogenesis factors, an RNA chaperone and ribosomal proteins associate with the nascent pre-rRNA and work in concert to generate RNA folding, modifications, rearrangements and cleavage as well as targeted degradation of pre-ribosomal RNA by the RNA exosome. Involved in neuronal-lineage cell proliferation. The sequence is that of HEAT repeat-containing protein 1 from Homo sapiens (Human).